The primary structure comprises 254 residues: Adenosine 5'-phosphosulfate reductase (254 aa).

4 residues coordinate [4Fe-4S] cluster: Cys-131, Cys-132, Cys-212, and Cys-215. Cys-238 serves as the catalytic Nucleophile; cysteine thiosulfonate intermediate.

Belongs to the PAPS reductase family. CysH subfamily. Requires [4Fe-4S] cluster as cofactor.

The protein localises to the cytoplasm. The enzyme catalyses [thioredoxin]-disulfide + sulfite + AMP + 2 H(+) = adenosine 5'-phosphosulfate + [thioredoxin]-dithiol. Its pathway is sulfur metabolism; hydrogen sulfide biosynthesis; sulfite from sulfate. Its function is as follows. Catalyzes the formation of sulfite from adenosine 5'-phosphosulfate (APS) using thioredoxin as an electron donor. The sequence is that of Adenosine 5'-phosphosulfate reductase from Mesorhizobium japonicum (strain LMG 29417 / CECT 9101 / MAFF 303099) (Mesorhizobium loti (strain MAFF 303099)).